Reading from the N-terminus, the 844-residue chain is Janus kinase and microtubule-interacting protein 3 (844 aa).

The stretch at Ser-8–His-259 forms a coiled coil. Positions Gln-249–Lys-290 are disordered. The segment covering Lys-254–Leu-267 has biased composition (basic and acidic residues). Residues Ala-270–Ser-282 show a composition bias toward low complexity. Residues Glu-289–Ala-421 are a coiled coil. At Ser-384 the chain carries Phosphoserine. The segment covering Ser-466–Cys-483 has biased composition (polar residues). The disordered stretch occupies residues Ser-466–Asp-488. 2 coiled-coil regions span residues Met-493 to Lys-621 and Glu-688 to Phe-833.

Belongs to the JAKMIP family.

The protein resides in the golgi apparatus. This is Janus kinase and microtubule-interacting protein 3 (Jakmip3) from Mus musculus (Mouse).